Consider the following 335-residue polypeptide: Phenylalanine--tRNA ligase alpha subunit (335 aa).

E262 contacts Mg(2+).

It belongs to the class-II aminoacyl-tRNA synthetase family. Phe-tRNA synthetase alpha subunit type 1 subfamily. Tetramer of two alpha and two beta subunits. Mg(2+) serves as cofactor.

It is found in the cytoplasm. The catalysed reaction is tRNA(Phe) + L-phenylalanine + ATP = L-phenylalanyl-tRNA(Phe) + AMP + diphosphate + H(+). The sequence is that of Phenylalanine--tRNA ligase alpha subunit from Prochlorococcus marinus (strain MIT 9313).